A 234-amino-acid polypeptide reads, in one-letter code: Interleukin-34 (234 aa).

An N-terminal signal peptide occupies residues 1–20; it reads MPQGLAWLRYLGILLGMALG. A glycan (N-linked (GlcNAc...) asparagine) is linked at Asn76. The segment at 191–234 is disordered; that stretch reads EAPQPQPRSPASAQCEAAQLYPLPQPPSTSLPRVLGPSAGPPTQ.

Belongs to the IL-34 family. Homodimer. Interacts with CSF1R.

It localises to the secreted. Functionally, cytokine that promotes the proliferation, survival and differentiation of monocytes and macrophages. Promotes the release of pro-inflammatory chemokines, and thereby plays an important role in innate immunity and in inflammatory processes. Plays an important role in the regulation of osteoclast proliferation and differentiation, and in the regulation of bone resorption. Signaling via CSF1R and its downstream effectors stimulates phosphorylation of MAPK1/ERK2 AND MAPK3/ERK1. This Bos taurus (Bovine) protein is Interleukin-34.